The chain runs to 248 residues: MAGHSKWKNIQHRKGRQDAKKSKAFTKVAKEIIIAAKGGGDPVANSRLRAAIAAAKAVNLPKDKIETAIKKGTGELAGGDIFELVYEGYGPGGIAFLIEVATDNKNRTVAEVRHILTKSGGSMGEAGCVGWMFDKKGVLTFPKEAYSEDQLMEIGLEAGCDDVIDEGDSWAVHVDPSSFEDVKAAFEQAGVTAESVELASVPQNTIEVDAETGKKLLRLVDALEENDDVQNVFANFDLPDEVLAEMED.

Over residues 1–15 (MAGHSKWKNIQHRKG) the composition is skewed to basic residues. A disordered region spans residues 1–22 (MAGHSKWKNIQHRKGRQDAKKS).

The protein belongs to the TACO1 family.

Its subcellular location is the cytoplasm. The chain is Probable transcriptional regulatory protein Dde_2325 from Oleidesulfovibrio alaskensis (strain ATCC BAA-1058 / DSM 17464 / G20) (Desulfovibrio alaskensis).